The sequence spans 146 residues: UPF0260 protein Sden_1632 (146 aa).

This sequence belongs to the UPF0260 family.

In Shewanella denitrificans (strain OS217 / ATCC BAA-1090 / DSM 15013), this protein is UPF0260 protein Sden_1632.